The chain runs to 256 residues: Small ribosomal subunit protein eS1 (256 aa).

Basic residues predominate over residues 1–18 (MAVGKNKRLSKGKKGLKK). Residues 1-20 (MAVGKNKRLSKGKKGLKKRT) form a disordered region. Alanine 2 bears the N-acetylalanine; partial mark.

The protein belongs to the eukaryotic ribosomal protein eS1 family. In terms of assembly, component of the small ribosomal subunit. Mature ribosomes consist of a small (40S) and a large (60S) subunit. The 40S subunit contains about 33 different proteins and 1 molecule of RNA (18S). The 60S subunit contains about 49 different proteins and 3 molecules of RNA (25S, 5.8S and 5S).

The protein resides in the cytoplasm. The protein is Small ribosomal subunit protein eS1 (rps1) of Talaromyces stipitatus (strain ATCC 10500 / CBS 375.48 / QM 6759 / NRRL 1006) (Penicillium stipitatum).